The chain runs to 434 residues: 3-phosphoshikimate 1-carboxyvinyltransferase (434 aa).

3-phosphoshikimate-binding residues include Lys-22, Ser-23, and Arg-27. Lys-22 lines the phosphoenolpyruvate pocket. Residues Gly-94 and Arg-122 each contribute to the phosphoenolpyruvate site. Positions 169, 170, 171, 199, 320, and 347 each coordinate 3-phosphoshikimate. Residue Gln-171 coordinates phosphoenolpyruvate. Asp-320 functions as the Proton acceptor in the catalytic mechanism. Residues Arg-351, Arg-395, and Lys-420 each coordinate phosphoenolpyruvate.

Belongs to the EPSP synthase family. Monomer.

It is found in the cytoplasm. It catalyses the reaction 3-phosphoshikimate + phosphoenolpyruvate = 5-O-(1-carboxyvinyl)-3-phosphoshikimate + phosphate. It functions in the pathway metabolic intermediate biosynthesis; chorismate biosynthesis; chorismate from D-erythrose 4-phosphate and phosphoenolpyruvate: step 6/7. Functionally, catalyzes the transfer of the enolpyruvyl moiety of phosphoenolpyruvate (PEP) to the 5-hydroxyl of shikimate-3-phosphate (S3P) to produce enolpyruvyl shikimate-3-phosphate and inorganic phosphate. This is 3-phosphoshikimate 1-carboxyvinyltransferase from Ralstonia pickettii (strain 12J).